The primary structure comprises 272 residues: Shikimate dehydrogenase (NADP(+)) (272 aa).

Shikimate contacts are provided by residues 14 to 16 and Thr-61; that span reads SRS. Lys-65 serves as the catalytic Proton acceptor. Glu-77 serves as a coordination point for NADP(+). Residues Asn-86 and Asp-102 each coordinate shikimate. NADP(+) contacts are provided by residues 126–130, 149–154, and Met-213; these read GVGGA and NRTFPR. Tyr-215 is a shikimate binding site. Residue Gly-237 coordinates NADP(+).

This sequence belongs to the shikimate dehydrogenase family. As to quaternary structure, homodimer.

The catalysed reaction is shikimate + NADP(+) = 3-dehydroshikimate + NADPH + H(+). The protein operates within metabolic intermediate biosynthesis; chorismate biosynthesis; chorismate from D-erythrose 4-phosphate and phosphoenolpyruvate: step 4/7. Its function is as follows. Involved in the biosynthesis of the chorismate, which leads to the biosynthesis of aromatic amino acids. Catalyzes the reversible NADPH linked reduction of 3-dehydroshikimate (DHSA) to yield shikimate (SA). The protein is Shikimate dehydrogenase (NADP(+)) of Sodalis glossinidius (strain morsitans).